The sequence spans 113 residues: Large ribosomal subunit protein uL22 (113 aa).

Belongs to the universal ribosomal protein uL22 family. As to quaternary structure, part of the 50S ribosomal subunit.

In terms of biological role, this protein binds specifically to 23S rRNA; its binding is stimulated by other ribosomal proteins, e.g. L4, L17, and L20. It is important during the early stages of 50S assembly. It makes multiple contacts with different domains of the 23S rRNA in the assembled 50S subunit and ribosome. Its function is as follows. The globular domain of the protein is located near the polypeptide exit tunnel on the outside of the subunit, while an extended beta-hairpin is found that lines the wall of the exit tunnel in the center of the 70S ribosome. The protein is Large ribosomal subunit protein uL22 of Symbiobacterium thermophilum (strain DSM 24528 / JCM 14929 / IAM 14863 / T).